The primary structure comprises 177 residues: Peptide methionine sulfoxide reductase MsrA (177 aa).

Cys-15 is an active-site residue.

This sequence belongs to the MsrA Met sulfoxide reductase family.

The catalysed reaction is L-methionyl-[protein] + [thioredoxin]-disulfide + H2O = L-methionyl-(S)-S-oxide-[protein] + [thioredoxin]-dithiol. It catalyses the reaction [thioredoxin]-disulfide + L-methionine + H2O = L-methionine (S)-S-oxide + [thioredoxin]-dithiol. Functionally, has an important function as a repair enzyme for proteins that have been inactivated by oxidation. Catalyzes the reversible oxidation-reduction of methionine sulfoxide in proteins to methionine. The protein is Peptide methionine sulfoxide reductase MsrA of Listeria welshimeri serovar 6b (strain ATCC 35897 / DSM 20650 / CCUG 15529 / CIP 8149 / NCTC 11857 / SLCC 5334 / V8).